Here is a 276-residue protein sequence, read N- to C-terminus: Ribosomal RNA small subunit methyltransferase A (276 aa).

6 residues coordinate S-adenosyl-L-methionine: Asn-27, Leu-29, Gly-54, Glu-75, Asp-101, and Asn-122.

The protein belongs to the class I-like SAM-binding methyltransferase superfamily. rRNA adenine N(6)-methyltransferase family. RsmA subfamily.

It localises to the cytoplasm. It catalyses the reaction adenosine(1518)/adenosine(1519) in 16S rRNA + 4 S-adenosyl-L-methionine = N(6)-dimethyladenosine(1518)/N(6)-dimethyladenosine(1519) in 16S rRNA + 4 S-adenosyl-L-homocysteine + 4 H(+). Specifically dimethylates two adjacent adenosines (A1518 and A1519) in the loop of a conserved hairpin near the 3'-end of 16S rRNA in the 30S particle. May play a critical role in biogenesis of 30S subunits. This Brucella abortus (strain S19) protein is Ribosomal RNA small subunit methyltransferase A.